We begin with the raw amino-acid sequence, 245 residues long: MLTSKNNFHKVAPFYEQNALIQKKMAERLMELVEKNVGCEFDDVLEIGCGTGLFTKLIQKKINYNRLFLNDLHNFISFEGGYDFLEGDIEEINLSDKFDIIFSNATFQWVKDFEQLIQKLYQSLKPQGYLCFTTFGEENLKEVKRITNVGLNYLTFNEYLDFLGRYFKIVAHYHTKECLYFQSPVDVLKHMKLTGVNSVEKVQWTKRDFVNFCESYEQFKTEEGYLLTYHPFYFIVSKNKEVCYD.

It belongs to the methyltransferase superfamily.

It carries out the reaction malonyl-[ACP] + S-adenosyl-L-methionine = malonyl-[ACP] methyl ester + S-adenosyl-L-homocysteine. It functions in the pathway cofactor biosynthesis; biotin biosynthesis. Converts the free carboxyl group of a malonyl-thioester to its methyl ester by transfer of a methyl group from S-adenosyl-L-methionine (SAM). It allows to synthesize pimeloyl-ACP via the fatty acid synthetic pathway. The sequence is that of Malonyl-[acyl-carrier protein] O-methyltransferase from Calditerrivibrio nitroreducens (strain DSM 19672 / NBRC 101217 / Yu37-1).